We begin with the raw amino-acid sequence, 492 residues long: GTPase Der (492 aa).

EngA-type G domains are found at residues 3–167 (FTLA…EKFE) and 207–382 (LQVA…DVWN). GTP is bound by residues 9 to 16 (GRPNVGKS), 56 to 60 (DSAGL), 119 to 122 (NKSE), 213 to 220 (GRPNAGKS), 260 to 264 (DTAGM), and 325 to 328 (NKWD). The KH-like domain occupies 383-469 (RRVPTAALNR…RLTLRGQGDK (87 aa)). Positions 461–492 (LTLRGQGDKNPYKGKKKSTPSRLRKHLEGRKS) are disordered. Positions 472-492 (YKGKKKSTPSRLRKHLEGRKS) are enriched in basic residues.

Belongs to the TRAFAC class TrmE-Era-EngA-EngB-Septin-like GTPase superfamily. EngA (Der) GTPase family. In terms of assembly, associates with the 50S ribosomal subunit.

GTPase that plays an essential role in the late steps of ribosome biogenesis. This chain is GTPase Der, found in Ruegeria sp. (strain TM1040) (Silicibacter sp.).